A 339-amino-acid polypeptide reads, in one-letter code: D-erythrose-4-phosphate dehydrogenase (339 aa).

Position 11-12 (11-12 (RI)) interacts with NAD(+). Substrate contacts are provided by residues 153–155 (SCT), Arg-199, 212–213 (TK), and Arg-235. Cys-154 acts as the Nucleophile in catalysis. NAD(+) is bound at residue Asn-317.

It belongs to the glyceraldehyde-3-phosphate dehydrogenase family. Epd subfamily. In terms of assembly, homotetramer.

It is found in the cytoplasm. It catalyses the reaction D-erythrose 4-phosphate + NAD(+) + H2O = 4-phospho-D-erythronate + NADH + 2 H(+). The protein operates within cofactor biosynthesis; pyridoxine 5'-phosphate biosynthesis; pyridoxine 5'-phosphate from D-erythrose 4-phosphate: step 1/5. Catalyzes the NAD-dependent conversion of D-erythrose 4-phosphate to 4-phosphoerythronate. The chain is D-erythrose-4-phosphate dehydrogenase from Shewanella pealeana (strain ATCC 700345 / ANG-SQ1).